A 225-amino-acid polypeptide reads, in one-letter code: NAD(P)H-quinone oxidoreductase subunit K, chloroplastic (225 aa).

Positions 43, 44, 108, and 139 each coordinate [4Fe-4S] cluster.

This sequence belongs to the complex I 20 kDa subunit family. NDH is composed of at least 16 different subunits, 5 of which are encoded in the nucleus. Requires [4Fe-4S] cluster as cofactor.

Its subcellular location is the plastid. The protein localises to the chloroplast thylakoid membrane. The enzyme catalyses a plastoquinone + NADH + (n+1) H(+)(in) = a plastoquinol + NAD(+) + n H(+)(out). It catalyses the reaction a plastoquinone + NADPH + (n+1) H(+)(in) = a plastoquinol + NADP(+) + n H(+)(out). In terms of biological role, NDH shuttles electrons from NAD(P)H:plastoquinone, via FMN and iron-sulfur (Fe-S) centers, to quinones in the photosynthetic chain and possibly in a chloroplast respiratory chain. The immediate electron acceptor for the enzyme in this species is believed to be plastoquinone. Couples the redox reaction to proton translocation, and thus conserves the redox energy in a proton gradient. The chain is NAD(P)H-quinone oxidoreductase subunit K, chloroplastic from Lobularia maritima (Sweet alyssum).